The sequence spans 558 residues: MEIRAAEDIEIRTDLFPPLSPLASSLYDSFLSSHCSSCFSLLPPSPPQPLYCSAACSLTDSFTNSPQFPPEITPILPSDIRTSLHLLNSTAVDTSSSPHRLNNLLTNHHLLMADPSISVAIHHAANFIATVIRSNRKNTELEEAAICAVLTNAVEVHDSNGLALGIALYNSSFSWINHSCSPNSCYRFVNNRTSYHDVHVTNTETSSNLELQEQVCGTSLNSGNGNGPKLIVRSIKRIKSGEEITVSYIDLLQPTGLRQSDLWSKYRFMCNCGRCAASPPAYVDSILEGVLTLESEKTTVGHFDGSTNKDEAVGKMNDYIQEAIDDFLSDNIDPKTCCEMIESVLHHGIQFKEDSQPHCLRLHACHYVALNAYITLATAYRIRSIDSETGIVCDMSRISAAYSLFLAGVSHHLFCAERSFAISAAKFWKNAGELLFDLAPKLLMELSVESDVKCTKCLMLETSNSHRDIKEKSRQILSCVRDISQVTWSFLTRGCPYLEKFRSPVDFSLTRTNGEREESSKDQTVNVLLLSSHCLLYADLLTDLCYGQKSHLVSRFRL.

The SET domain occupies 115 to 249 (PSISVAIHHA…SGEEITVSYI (135 aa)).

Belongs to the class V-like SAM-binding methyltransferase superfamily.

In Arabidopsis thaliana (Mouse-ear cress), this protein is Protein SET DOMAIN GROUP 41 (SDG41).